A 99-amino-acid polypeptide reads, in one-letter code: Small ribosomal subunit protein bS20 (99 aa).

It belongs to the bacterial ribosomal protein bS20 family.

In terms of biological role, binds directly to 16S ribosomal RNA. The sequence is that of Small ribosomal subunit protein bS20 from Prochlorococcus marinus (strain SARG / CCMP1375 / SS120).